The sequence spans 618 residues: 1-deoxy-D-xylulose-5-phosphate synthase (618 aa).

Residues His-72 and 113 to 115 (GHA) contribute to the thiamine diphosphate site. Asp-144 contributes to the Mg(2+) binding site. Residues 145–146 (GA), Asn-173, His-284, and Glu-359 contribute to the thiamine diphosphate site. Mg(2+) is bound at residue Asn-173.

Belongs to the transketolase family. DXPS subfamily. In terms of assembly, homodimer. It depends on Mg(2+) as a cofactor. Thiamine diphosphate serves as cofactor.

It carries out the reaction D-glyceraldehyde 3-phosphate + pyruvate + H(+) = 1-deoxy-D-xylulose 5-phosphate + CO2. The protein operates within metabolic intermediate biosynthesis; 1-deoxy-D-xylulose 5-phosphate biosynthesis; 1-deoxy-D-xylulose 5-phosphate from D-glyceraldehyde 3-phosphate and pyruvate: step 1/1. Functionally, catalyzes the acyloin condensation reaction between C atoms 2 and 3 of pyruvate and glyceraldehyde 3-phosphate to yield 1-deoxy-D-xylulose-5-phosphate (DXP). The sequence is that of 1-deoxy-D-xylulose-5-phosphate synthase from Dictyoglomus turgidum (strain DSM 6724 / Z-1310).